The chain runs to 127 residues: Fatty acid-binding protein, liver (127 aa).

Residue Met-1 is modified to N-acetylmethionine. At Ser-11 the chain carries Phosphoserine. Residues Lys-31 and Lys-36 each carry the N6-succinyllysine modification. A Phosphoserine modification is found at Ser-39. An N6-succinyllysine modification is found at Lys-46. Thr-51 carries the post-translational modification Phosphothreonine. Residue Ser-56 is modified to Phosphoserine. N6-succinyllysine is present on residues Lys-57, Lys-78, and Lys-90. Ser-100 bears the Phosphoserine mark. Lys-121 is subject to N6-succinyllysine.

This sequence belongs to the calycin superfamily. Fatty-acid binding protein (FABP) family. In terms of assembly, monomer.

The protein resides in the cytoplasm. Its function is as follows. Plays a role in lipoprotein-mediated cholesterol uptake in hepatocytes. Binds cholesterol. Binds free fatty acids and their coenzyme A derivatives, bilirubin, and some other small molecules in the cytoplasm. May be involved in intracellular lipid transport. The sequence is that of Fatty acid-binding protein, liver (FABP1) from Sus scrofa (Pig).